The chain runs to 548 residues: Membrane protein insertase YidC (548 aa).

The chain crosses the membrane as a helical span at residues 6-26; the sequence is NLLVIALLFVSFMIWQAWEQD. A disordered region spans residues 28–58; that stretch reads NPQPQQQQTTQTTTTAAGSAADQGVPASGQG. Low complexity predominate over residues 29–42; the sequence is PQPQQQQTTQTTTT. A run of 4 helical transmembrane segments spans residues 350-370, 420-440, 458-478, and 499-519; these read FLGN…GIMY, LGGC…YYML, LSAQ…MFFI, and PVIF…YYIV.

The protein belongs to the OXA1/ALB3/YidC family. Type 1 subfamily. In terms of assembly, interacts with the Sec translocase complex via SecD. Specifically interacts with transmembrane segments of nascent integral membrane proteins during membrane integration.

It localises to the cell inner membrane. In terms of biological role, required for the insertion and/or proper folding and/or complex formation of integral membrane proteins into the membrane. Involved in integration of membrane proteins that insert both dependently and independently of the Sec translocase complex, as well as at least some lipoproteins. Aids folding of multispanning membrane proteins. This chain is Membrane protein insertase YidC, found in Enterobacter sp. (strain 638).